Reading from the N-terminus, the 735-residue chain is Translation initiation factor IF-2, chloroplastic (735 aa).

The 173-residue stretch at Arg239–Tyr411 folds into the tr-type G domain. Residues Gly248–Thr255 are G1. Gly248 to Thr255 is a binding site for GTP. Positions Gly273–Lys277 are G2. A G3 region spans residues Asp298–Gly301. Residues Asp298 to His302 and Asn352 to Asp355 each bind GTP. A G4 region spans residues Asn352–Asp355. The interval Ser388–Ser390 is G5.

Belongs to the TRAFAC class translation factor GTPase superfamily. Classic translation factor GTPase family. IF-2 subfamily.

It is found in the plastid. The protein localises to the chloroplast. Its function is as follows. One of the essential components for the initiation of protein synthesis. Protects formylmethionyl-tRNA from spontaneous hydrolysis and promotes its binding to the 30S ribosomal subunits. Also involved in the hydrolysis of GTP during the formation of the 70S ribosomal complex. This chain is Translation initiation factor IF-2, chloroplastic (infB), found in Guillardia theta (Cryptophyte).